The following is a 913-amino-acid chain: MSLSHLLRRLCTTTTTTRSPLSISFLHQRIHNISLSPANEDPETTTGNNQDSEKYPNLNPIPNDPSQFQIPQNHTPPIPYPPIPHRTMAFSSAEEAAAERRRRKRRLRIEPPLHALRRDPSAPPPKRDPNAPRLPDSTSALVGQRLNLHNRVQSLIRASDLDAASKLARQSVFSNTRPTVFTCNAIIAAMYRAKRYSESISLFQYFFKQSNIVPNVVSYNQIINAHCDEGNVDEALEVYRHILANAPFAPSSVTYRHLTKGLVQAGRIGDAASLLREMLSKGQAADSTVYNNLIRGYLDLGDFDKAVEFFDELKSKCTVYDGIVNATFMEYWFEKGNDKEAMESYRSLLDKKFRMHPPTGNVLLEVFLKFGKKDEAWALFNEMLDNHAPPNILSVNSDTVGIMVNECFKMGEFSEAINTFKKVGSKVTSKPFVMDYLGYCNIVTRFCEQGMLTEAERFFAEGVSRSLPADAPSHRAMIDAYLKAERIDDAVKMLDRMVDVNLRVVADFGARVFGELIKNGKLTESAEVLTKMGEREPKPDPSIYDVVVRGLCDGDALDQAKDIVGEMIRHNVGVTTVLREFIIEVFEKAGRREEIEKILNSVARPVRNAGQSGNTPPRVPAVFGTTPAAPQQPRDRAPWTSQGVVHSNSGWANGTAGQTAGGAYKANNGQNPSWSNTSDNQQQQSWSNQTAGQQPPSWSRQAPGYQQQQSWSQQSGWSSPSGHQQSWTNQTAGQQQPWANQTPGQQQQWANQTPGQQQQLANQTPGQQQQWANQTPGQQQQWANQNNGHQQPWANQNTGHQQSWANQTPSQQQPWANQTTGQQQGWGNQTTGQQQQWANQTAGQQSGWTAQQQWSNQTASHQQSQWLNPVPGEVANQTPWSNSVDSHLPQQQEPGPSHECQETQEKKVVELRN.

The disordered stretch occupies residues 34 to 138 (SLSPANEDPE…PNAPRLPDST (105 aa)). A compositionally biased stretch (polar residues) spans 64–73 (DPSQFQIPQN). A compositionally biased stretch (pro residues) spans 74 to 84 (HTPPIPYPPIP). Residues 99–108 (ERRRRKRRLR) carry the Nuclear localization signal motif. Residues 108-130 (RIEPPLHALRRDPSAPPPKRDPN) show a composition bias toward basic and acidic residues. Positions 134–167 (LPDSTSALVGQRLNLHNRVQSLIRASDLDAASKL) are leucine-zipper. PPR repeat units follow at residues 179 to 214 (TVFTCNAIIAAMYRAKRYSESISLFQYFFKQSNIVP), 215 to 250 (NVVSYNQIINAHCDEGNVDEALEVYRHILANAPFAP), 251 to 285 (SSVTYRHLTKGLVQAGRIGDAASLLREMLSKGQAA), 286 to 316 (DSTVYNNLIRGYLDLGDFDKAVEFFDELKSK), 321 to 355 (DGIVNATFMEYWFEKGNDKEAMESYRSLLDKKFRM), 356 to 390 (HPPTGNVLLEVFLKFGKKDEAWALFNEMLDNHAPP), 396 to 426 (NSDTVGIMVNECFKMGEFSEAINTFKKVGSK), 435 to 469 (DYLGYCNIVTRFCEQGMLTEAERFFAEGVSRSLPA), 470 to 504 (DAPSHRAMIDAYLKAERIDDAVKMLDRMVDVNLRV), 505 to 539 (VADFGARVFGELIKNGKLTESAEVLTKMGEREPKP), and 540 to 574 (DPSIYDVVVRGLCDGDALDQAKDIVGEMIRHNVGV). A disordered region spans residues 607-913 (RNAGQSGNTP…QEKKVVELRN (307 aa)). Polar residues predominate over residues 639–649 (WTSQGVVHSNS). 2 stretches are compositionally biased toward low complexity: residues 650 to 666 (GWANGTAGQTAGGAYKA) and 673 to 690 (SWSNTSDNQQQQSWSNQT). The 14 X 11 AA approximate tandem repeats of W-x(2)-Q-x(4)-Q-x(2) stretch occupies residues 674-858 (WSNTSDNQQQ…TAQQQWSNQT (185 aa)). A compositionally biased stretch (polar residues) spans 691–700 (AGQQPPSWSR). Residues 706–727 (QQQQSWSQQSGWSSPSGHQQSW) show a composition bias toward low complexity. Residues 728–761 (TNQTAGQQQPWANQTPGQQQQWANQTPGQQQQLA) show a composition bias toward polar residues. Low complexity predominate over residues 762–791 (NQTPGQQQQWANQTPGQQQQWANQNNGHQQ). The segment covering 792-814 (PWANQNTGHQQSWANQTPSQQQP) has biased composition (polar residues). The span at 815-845 (WANQTTGQQQGWGNQTTGQQQQWANQTAGQQ) shows a compositional bias: low complexity. 2 stretches are compositionally biased toward polar residues: residues 846–867 (SGWTAQQQWSNQTASHQQSQWL) and 875–894 (ANQTPWSNSVDSHLPQQQEP). Positions 899–913 (ECQETQEKKVVELRN) are enriched in basic and acidic residues.

Belongs to the PPR family. P subfamily. Interacts with RPB36B through its WQQ domain. As to expression, ubiquitous but preferentially expressed in gametophytes and young embryos.

The protein localises to the nucleus. In terms of biological role, may function as a transcriptional regulator essential for early embryogenesis. The polypeptide is Pentatricopeptide repeat-containing protein At1g10270 (GRP23) (Arabidopsis thaliana (Mouse-ear cress)).